A 405-amino-acid polypeptide reads, in one-letter code: Dematin (405 aa).

4 disordered regions span residues 1–30 (MERLQKQPLTSPGSVSPSRDSSVPGSPSSI), 79–158 (PRSR…GSPQ), 173–192 (FPAAQPPDPNQPAKIETDYW), and 203–332 (TEWR…DRGN). Positions 11–29 (SPGSVSPSRDSSVPGSPSS) are enriched in low complexity. Phosphoserine occurs at positions 16, 18, 26, 92, 96, 105, 110, 113, and 156. Polar residues predominate over residues 108-123 (IISQASAPRTTGTPRT). Over residues 216–227 (EEEEEEEDDDSG) the composition is skewed to acidic residues. The segment at 224 to 308 (DDSGEEMKAL…SRLQSTEFSP (85 aa)) is interaction with RASGRF2. Ser-226 is subject to Phosphoserine. 2 stretches are compositionally biased toward basic and acidic residues: residues 228 to 242 (EEMKALRERQREELS) and 252 to 261 (ILKEEMEKSL). 8 positions are modified to phosphoserine: Ser-269, Ser-279, Ser-289, Ser-303, Ser-315, Ser-333, Ser-372, and Ser-383. The segment covering 276-322 (FHTSLHQGTSKSSSLPAYGRTTLSRLQSTEFSPSGSETGSPGLQNGE) has biased composition (polar residues). An HP domain is found at 337 to 405 (VLEQKIYPYE…NELKKKASLF (69 aa)). The residue at position 403 (Ser-403) is a Phosphoserine; by PKA.

The protein belongs to the villin/gelsolin family. In terms of assembly, monomeric (isoform 2); under reducing conditions. Self-associates. Exists under oxidizing condition as a trimer of two isoforms 2 and isoform 1 linked by disulfide bonds. Found in a complex with DMTN, F-actin and spectrin. Found in a complex with ADD2, DMTN and SLC2A1. Interacts with F-actin, ITPKB, RASGRF2 and spectrin. Isoform 2 interacts with SLC2A1 (via C-terminus cytoplasmic region). Isoform 1 and isoform 2 interact (phosphorylated form) with plasmodium berghei 14-3-3 protein; the interaction occurs in a PKA-dependent manner. Post-translationally, phosphorylated. Phosphorylation at Ser-403 by PKA causes the C-terminal headpiece domain to associate with the N-terminal core domain, and leads to the inhibition of its actin bundling activity. In terms of processing, the N-terminus is blocked. In terms of tissue distribution, expressed in platelets (at protein level). Expressed in heart, brain, lung, skeletal muscle, and kidney.

Its subcellular location is the cytoplasm. The protein localises to the cytosol. The protein resides in the perinuclear region. It is found in the cytoskeleton. It localises to the cell membrane. Its subcellular location is the membrane. The protein localises to the endomembrane system. The protein resides in the cell projection. Its function is as follows. Membrane-cytoskeleton-associated protein with F-actin-binding activity that induces F-actin bundles formation and stabilization. Its F-actin-bundling activity is reversibly regulated upon its phosphorylation by the cAMP-dependent protein kinase A (PKA). Binds to the erythrocyte membrane glucose transporter-1 SLC2A1/GLUT1, and hence stabilizes and attaches the spectrin-actin network to the erythrocytic plasma membrane. Plays a role in maintaining the functional integrity of PKA-activated erythrocyte shape and the membrane mechanical properties. Also plays a role as a modulator of actin dynamics in fibroblasts; acts as a negative regulator of the RhoA activation pathway. In platelets, functions as a regulator of internal calcium mobilization across the dense tubular system that affects platelet granule secretion pathways and aggregation. Also required for the formation of a diverse set of cell protrusions, such as filopodia and lamellipodia, necessary for platelet cell spreading, motility and migration. Acts as a tumor suppressor and inhibits malignant cell transformation. This is Dematin (DMTN) from Homo sapiens (Human).